Here is a 574-residue protein sequence, read N- to C-terminus: Enolase 4 (574 aa).

The segment covering 165–175 (EKERRQMEREA) has biased composition (basic and acidic residues). Residues 165 to 221 (EKERRQMEREASPMPLQPEPSPVTSPAPGKKKGSGKGKKAAVVEKPIPPEETPEAVV) are disordered. The segment covering 179-189 (PLQPEPSPVTS) has biased composition (pro residues). Residues 193-203 (GKKKGSGKGKK) show a composition bias toward basic residues. Glu287 is a binding site for substrate. The active-site Proton acceptor is the Lys467. Lys518 contacts substrate.

Belongs to the enolase family.

It catalyses the reaction (2R)-2-phosphoglycerate = phosphoenolpyruvate + H2O. Its pathway is carbohydrate degradation; glycolysis; pyruvate from D-glyceraldehyde 3-phosphate: step 4/5. In Xenopus tropicalis (Western clawed frog), this protein is Enolase 4 (eno4).